The primary structure comprises 209 residues: Urease accessory protein UreG (209 aa).

16-23 (GPVGSGKT) provides a ligand contact to GTP.

It belongs to the SIMIBI class G3E GTPase family. UreG subfamily. Homodimer. UreD, UreF and UreG form a complex that acts as a GTP-hydrolysis-dependent molecular chaperone, activating the urease apoprotein by helping to assemble the nickel containing metallocenter of UreC. The UreE protein probably delivers the nickel.

It localises to the cytoplasm. Facilitates the functional incorporation of the urease nickel metallocenter. This process requires GTP hydrolysis, probably effectuated by UreG. The chain is Urease accessory protein UreG from Blochmanniella floridana.